Consider the following 717-residue polypeptide: Ribosomal RNA large subunit methyltransferase K/L (717 aa).

Positions 43–154 (IGYKACLWSR…KGKANITLDL (112 aa)) constitute a THUMP domain.

The protein belongs to the methyltransferase superfamily. RlmKL family.

The protein resides in the cytoplasm. The catalysed reaction is guanosine(2445) in 23S rRNA + S-adenosyl-L-methionine = N(2)-methylguanosine(2445) in 23S rRNA + S-adenosyl-L-homocysteine + H(+). The enzyme catalyses guanosine(2069) in 23S rRNA + S-adenosyl-L-methionine = N(2)-methylguanosine(2069) in 23S rRNA + S-adenosyl-L-homocysteine + H(+). Functionally, specifically methylates the guanine in position 2445 (m2G2445) and the guanine in position 2069 (m7G2069) of 23S rRNA. This chain is Ribosomal RNA large subunit methyltransferase K/L, found in Aeromonas hydrophila subsp. hydrophila (strain ATCC 7966 / DSM 30187 / BCRC 13018 / CCUG 14551 / JCM 1027 / KCTC 2358 / NCIMB 9240 / NCTC 8049).